The sequence spans 84 residues: Small ribosomal subunit protein uS17 (84 aa).

Belongs to the universal ribosomal protein uS17 family. Part of the 30S ribosomal subunit.

One of the primary rRNA binding proteins, it binds specifically to the 5'-end of 16S ribosomal RNA. This chain is Small ribosomal subunit protein uS17, found in Blochmanniella pennsylvanica (strain BPEN).